We begin with the raw amino-acid sequence, 617 residues long: Chaperone protein HscA homolog (617 aa).

Belongs to the heat shock protein 70 family.

Chaperone involved in the maturation of iron-sulfur cluster-containing proteins. Has a low intrinsic ATPase activity which is markedly stimulated by HscB. This chain is Chaperone protein HscA homolog, found in Photobacterium profundum (strain SS9).